The chain runs to 172 residues: Shikimate kinase (172 aa).

11–16 (GSGKTT) provides a ligand contact to ATP. Mg(2+) is bound at residue threonine 15. Substrate is bound by residues aspartate 33, arginine 57, and glycine 79. ATP is bound at residue arginine 117. Arginine 136 serves as a coordination point for substrate.

It belongs to the shikimate kinase family. In terms of assembly, monomer. Requires Mg(2+) as cofactor.

The protein resides in the cytoplasm. The catalysed reaction is shikimate + ATP = 3-phosphoshikimate + ADP + H(+). The protein operates within metabolic intermediate biosynthesis; chorismate biosynthesis; chorismate from D-erythrose 4-phosphate and phosphoenolpyruvate: step 5/7. In terms of biological role, catalyzes the specific phosphorylation of the 3-hydroxyl group of shikimic acid using ATP as a cosubstrate. The protein is Shikimate kinase of Caldicellulosiruptor bescii (strain ATCC BAA-1888 / DSM 6725 / KCTC 15123 / Z-1320) (Anaerocellum thermophilum).